The sequence spans 669 residues: Pre-mRNA-processing factor 39 (669 aa).

The segment covering 1 to 10 has biased composition (basic and acidic residues); sequence MQNSHMDEYR. A disordered region spans residues 1–23; that stretch reads MQNSHMDEYRNSSNGSTGNSSEV. The span at 11–23 shows a compositional bias: low complexity; sequence NSSNGSTGNSSEV. Ser44 bears the Phosphoserine mark. HAT repeat units follow at residues 109–141, 143–175, 183–218, 220–253, 333–365, 367–399, and 404–436; these read NHLMAARKAFDRFFIHYPYCYGYWKKYADLEKR, DNIKPSDEVYRRGLQAIPLSVDLWIHYINFLKE, ETNNTIRGTFEHAVLAAGTDFRSDRLWEMYINWENE, GNLREVTAIYDRILGIPTQLYSHHFQRFKEHVQN, TFEEGIKRPYFHVKPLEKAQLKNWKEYLEFEIE, GTHERVVVLFERCVISCALYEEFWIKYAKYMEN, and GVRHVFSRACTIHLPKKPMVHMLWAAFEEQQGN. Residues 599–624 are compositionally biased toward basic and acidic residues; it reads KEQDSLKRKAENGSEEPEEKKAHTED. Residues 599 to 634 form a disordered region; the sequence is KEQDSLKRKAENGSEEPEEKKAHTEDTTSSSTQMID. Residues 625-634 are compositionally biased toward polar residues; sequence TTSSSTQMID.

This sequence belongs to the PRP39 family.

It localises to the nucleus. In terms of biological role, involved in pre-mRNA splicing. In Homo sapiens (Human), this protein is Pre-mRNA-processing factor 39 (PRPF39).